Reading from the N-terminus, the 776-residue chain is 3-isopropylmalate dehydratase (776 aa).

Residues cysteine 357, cysteine 418, and cysteine 421 each coordinate [4Fe-4S] cluster. Basic and acidic residues predominate over residues serine 482–aspartate 493. 2 disordered regions span residues serine 482–alanine 518 and aspartate 525–alanine 544. Positions proline 527 to serine 538 are enriched in polar residues.

Belongs to the aconitase/IPM isomerase family. As to quaternary structure, monomer. It depends on [4Fe-4S] cluster as a cofactor.

The enzyme catalyses (2R,3S)-3-isopropylmalate = (2S)-2-isopropylmalate. Its pathway is amino-acid biosynthesis; L-leucine biosynthesis; L-leucine from 3-methyl-2-oxobutanoate: step 2/4. Its function is as follows. Catalyzes the isomerization between 2-isopropylmalate and 3-isopropylmalate, via the formation of 2-isopropylmaleate. The polypeptide is 3-isopropylmalate dehydratase (LEU1) (Eremothecium gossypii (strain ATCC 10895 / CBS 109.51 / FGSC 9923 / NRRL Y-1056) (Yeast)).